The chain runs to 204 residues: Thiamine-phosphate synthase (204 aa).

Residues Gln37–Lys41 and Asn69 each bind 4-amino-2-methyl-5-(diphosphooxymethyl)pyrimidine. Residues Asp70 and Asp89 each coordinate Mg(2+). Ser108 is a binding site for 4-amino-2-methyl-5-(diphosphooxymethyl)pyrimidine. Thr134–Thr136 provides a ligand contact to 2-[(2R,5Z)-2-carboxy-4-methylthiazol-5(2H)-ylidene]ethyl phosphate. Lys137 provides a ligand contact to 4-amino-2-methyl-5-(diphosphooxymethyl)pyrimidine. 2-[(2R,5Z)-2-carboxy-4-methylthiazol-5(2H)-ylidene]ethyl phosphate-binding positions include Gly165 and Ile185 to Ser186.

This sequence belongs to the thiamine-phosphate synthase family. Requires Mg(2+) as cofactor.

The catalysed reaction is 2-[(2R,5Z)-2-carboxy-4-methylthiazol-5(2H)-ylidene]ethyl phosphate + 4-amino-2-methyl-5-(diphosphooxymethyl)pyrimidine + 2 H(+) = thiamine phosphate + CO2 + diphosphate. It carries out the reaction 2-(2-carboxy-4-methylthiazol-5-yl)ethyl phosphate + 4-amino-2-methyl-5-(diphosphooxymethyl)pyrimidine + 2 H(+) = thiamine phosphate + CO2 + diphosphate. It catalyses the reaction 4-methyl-5-(2-phosphooxyethyl)-thiazole + 4-amino-2-methyl-5-(diphosphooxymethyl)pyrimidine + H(+) = thiamine phosphate + diphosphate. It functions in the pathway cofactor biosynthesis; thiamine diphosphate biosynthesis; thiamine phosphate from 4-amino-2-methyl-5-diphosphomethylpyrimidine and 4-methyl-5-(2-phosphoethyl)-thiazole: step 1/1. Its function is as follows. Condenses 4-methyl-5-(beta-hydroxyethyl)thiazole monophosphate (THZ-P) and 2-methyl-4-amino-5-hydroxymethyl pyrimidine pyrophosphate (HMP-PP) to form thiamine monophosphate (TMP). The protein is Thiamine-phosphate synthase of Clostridium novyi (strain NT).